Here is a 221-residue protein sequence, read N- to C-terminus: Octanoyltransferase (221 aa).

In terms of domain architecture, BPL/LPL catalytic spans 14–202 (GVRPDTLWFL…MLGARNAPHP (189 aa)). Residues 54–61 (RGGLLTYH), 128–130 (SIG), and 141–143 (GFA) each bind substrate. Cys-159 serves as the catalytic Acyl-thioester intermediate. The interval 197-221 (RNAPHPPAPNLSSGDLGTGTRAGRT) is disordered.

This sequence belongs to the LipB family.

It is found in the cytoplasm. It catalyses the reaction octanoyl-[ACP] + L-lysyl-[protein] = N(6)-octanoyl-L-lysyl-[protein] + holo-[ACP] + H(+). It participates in protein modification; protein lipoylation via endogenous pathway; protein N(6)-(lipoyl)lysine from octanoyl-[acyl-carrier-protein]: step 1/2. In terms of biological role, catalyzes the transfer of endogenously produced octanoic acid from octanoyl-acyl-carrier-protein onto the lipoyl domains of lipoate-dependent enzymes. Lipoyl-ACP can also act as a substrate although octanoyl-ACP is likely to be the physiological substrate. In Frankia casuarinae (strain DSM 45818 / CECT 9043 / HFP020203 / CcI3), this protein is Octanoyltransferase.